A 150-amino-acid chain; its full sequence is FAD synthase (150 aa).

ATP is bound by residues Thr-20–Phe-21, His-25–His-28, and Asp-103.

This sequence belongs to the archaeal FAD synthase family. In terms of assembly, homodimer. Requires a divalent metal cation as cofactor.

It carries out the reaction FMN + ATP + H(+) = FAD + diphosphate. It functions in the pathway cofactor biosynthesis; FAD biosynthesis; FAD from FMN: step 1/1. Functionally, catalyzes the transfer of the AMP portion of ATP to flavin mononucleotide (FMN) to produce flavin adenine dinucleotide (FAD) coenzyme. The sequence is that of FAD synthase from Methanohalobium evestigatum (strain ATCC BAA-1072 / DSM 3721 / NBRC 107634 / OCM 161 / Z-7303).